Consider the following 391-residue polypeptide: 2-deoxy-scyllo-inosose synthase (391 aa).

Residues Asp42, 73–76 (EVHK), 105–109 (GVTGN), 129–130 (TT), 140–142 (SLK), and 151–152 (KN) contribute to the NAD(+) site. The active site involves Lys142. Glu184 contacts Co(2+). The active site involves Glu244. Residues His247 and His263 each coordinate Co(2+).

It belongs to the sugar phosphate cyclases superfamily. DOI synthase family. NAD(+) is required as a cofactor. Co(2+) serves as cofactor.

The catalysed reaction is D-glucose 6-phosphate = 2-deoxy-L-scyllo-inosose + phosphate. It functions in the pathway metabolic intermediate biosynthesis; 2-deoxystreptamine biosynthesis; 2-deoxystreptamine from D-glucose 6-phosphate: step 1/4. Its pathway is antibiotic biosynthesis; ribostamycin biosynthesis. Catalyzes the intramolecular carbocycle formation from D-glucose-6-phosphate to 2-deoxy-scyllo-inosose (DOI). The protein is 2-deoxy-scyllo-inosose synthase (rbmA) of Streptomyces ribosidificus.